The primary structure comprises 257 residues: Transcription factor LBX2 (257 aa).

Residues 1 to 43 (MTSSSKDMKAGSVLQSSGEERRRGPLDQLPPPANSNKPLTPFS) are disordered. The tract at residues 1 to 46 (MTSSSKDMKAGSVLQSSGEERRRGPLDQLPPPANSNKPLTPFSIED) is required for convergent extension movement and hypaxial myogenesis during gastrulation. Required for the formation of thick and thin myofilaments. Required for myod1 expression in the pectoral fin bud. Required for continuous expression of cxcl12a in the posterior lateral mesoderm at the tail bud stage and in adaxial cells at the 10-somite stage. Positions 126-185 (RRKSRTAFTNHQIYELEKRFLYQKYLSPADRDQIAQQLGLTNAQVITWFQNRRAKLKRDL) form a DNA-binding region, homeobox. The interval 206–257 (LVSMEDMEDAHGGSGPISPSLSPRAFPQSPSSSRGQTTDEFSEEDEEIEVDD) is disordered. Residues 233-243 (QSPSSSRGQTT) are compositionally biased toward polar residues. Residues 245 to 257 (EFSEEDEEIEVDD) show a composition bias toward acidic residues.

Interacts (via N-terminus) with tle3a/gro2 (via C-terminus).

It localises to the nucleus. Functionally, transcription factor required in several developmental processes. Involved in axis formation during embryonic development by inhibiting tle3a/gro2 from binding to tcf7l1a, thereby facilitating ctnnb1-mediated transcription of canonical Wnt/CTNNB1 signaling target genes. Regulates convergent extension movements and hypaxial myogenesis during gastrulation by activating non-canonical Wnt signaling via wnt5b. Required for the formation of myofibrils and fusion of fast muscle precursor cells, potentially via transcriptional regulation of genes specific to thick and thin myofilaments. Regulates the migration of the posterior lateral line primordium during embryonic development, possibly via regulation of cxcl12a/sdf1a expression in the posterior lateral mesoderm, thereby modulating the deposition of neuromasts at correct intervals. The protein is Transcription factor LBX2 of Danio rerio (Zebrafish).